Consider the following 442-residue polypeptide: Putative helicase 161L (442 aa).

The region spanning 88–241 (IDILEKNHSV…LFPIFFGKEK (154 aa)) is the Helicase ATP-binding domain. Residue 101–108 (CFTGFGKT) participates in ATP binding. The DEAH box signature appears at 194-197 (DEVH).

The protein belongs to the DEAD box helicase family. DEAH subfamily.

This chain is Putative helicase 161L, found in Invertebrate iridescent virus 6 (IIV-6).